The chain runs to 240 residues: Ribonuclease PH (240 aa).

Phosphate-binding positions include R87 and 125-127; that span reads GTR.

It belongs to the RNase PH family. Homohexameric ring arranged as a trimer of dimers.

The enzyme catalyses tRNA(n+1) + phosphate = tRNA(n) + a ribonucleoside 5'-diphosphate. Functionally, phosphorolytic 3'-5' exoribonuclease that plays an important role in tRNA 3'-end maturation. Removes nucleotide residues following the 3'-CCA terminus of tRNAs; can also add nucleotides to the ends of RNA molecules by using nucleoside diphosphates as substrates, but this may not be physiologically important. Probably plays a role in initiation of 16S rRNA degradation (leading to ribosome degradation) during starvation. The polypeptide is Ribonuclease PH (Pseudomonas syringae pv. syringae (strain B728a)).